The sequence spans 188 residues: Inner kinetochore subunit cnl2 (188 aa).

Belongs to the NKP2 family. Component of the inner kinetochore constitutive centromere-associated network (CCAN) (also known as central kinetochore Sim4 complex in fission yeast), which is composed of at least cnl2, cnp3, cnp20, fta1, fta2, fta3, fta4, fta6, fta7, mal2, mhf1, mhf2, mis6, mis15, mis17, sim4 and wip1.

It localises to the cytoplasm. The protein localises to the nucleus. The protein resides in the chromosome. Its subcellular location is the centromere. It is found in the kinetochore. Functionally, component of the kinetochore, a multiprotein complex that assembles on centromeric DNA and attaches chromosomes to spindle microtubules, mediating chromosome segregation and sister chromatid segregation during meiosis and mitosis. Component of the inner kinetochore constitutive centromere-associated network (CCAN), which serves as a structural platform for outer kinetochore assembly. The protein is Inner kinetochore subunit cnl2 (cnl2) of Schizosaccharomyces pombe (strain 972 / ATCC 24843) (Fission yeast).